Reading from the N-terminus, the 443-residue chain is Probable D-serine dehydratase (443 aa).

Residue K116 is modified to N6-(pyridoxal phosphate)lysine.

The protein belongs to the serine/threonine dehydratase family. DsdA subfamily. Requires pyridoxal 5'-phosphate as cofactor.

It catalyses the reaction D-serine = pyruvate + NH4(+). The chain is Probable D-serine dehydratase from Bacillus cereus (strain G9842).